The chain runs to 249 residues: Isoprenyl transferase (249 aa).

D29 is an active-site residue. D29 serves as a coordination point for Mg(2+). Residues 30 to 33 (GNGR), W34, R42, H46, and 74 to 76 (STE) each bind substrate. The active-site Proton acceptor is N77. Residues W78, R80, R197, and 203–205 (RLS) contribute to the substrate site. Position 216 (E216) interacts with Mg(2+).

It belongs to the UPP synthase family. In terms of assembly, homodimer. The cofactor is Mg(2+).

Catalyzes the condensation of isopentenyl diphosphate (IPP) with allylic pyrophosphates generating different type of terpenoids. This chain is Isoprenyl transferase, found in Gloeobacter violaceus (strain ATCC 29082 / PCC 7421).